The sequence spans 441 residues: Xaa-Pro dipeptidase (441 aa).

Asp244, Asp255, His336, Glu381, and Glu420 together coordinate Mn(2+).

This sequence belongs to the peptidase M24B family. Bacterial-type prolidase subfamily. The cofactor is Mn(2+).

The catalysed reaction is Xaa-L-Pro dipeptide + H2O = an L-alpha-amino acid + L-proline. Splits dipeptides with a prolyl residue in the C-terminal position. The chain is Xaa-Pro dipeptidase from Xanthomonas oryzae pv. oryzae (strain MAFF 311018).